The chain runs to 328 residues: Tetraacyldisaccharide 4'-kinase (328 aa).

55–62 (TAGGNGKT) is a binding site for ATP.

It belongs to the LpxK family.

The catalysed reaction is a lipid A disaccharide + ATP = a lipid IVA + ADP + H(+). It participates in glycolipid biosynthesis; lipid IV(A) biosynthesis; lipid IV(A) from (3R)-3-hydroxytetradecanoyl-[acyl-carrier-protein] and UDP-N-acetyl-alpha-D-glucosamine: step 6/6. Transfers the gamma-phosphate of ATP to the 4'-position of a tetraacyldisaccharide 1-phosphate intermediate (termed DS-1-P) to form tetraacyldisaccharide 1,4'-bis-phosphate (lipid IVA). The sequence is that of Tetraacyldisaccharide 4'-kinase from Shigella flexneri serotype 5b (strain 8401).